The primary structure comprises 313 residues: Probable GTP 3',8-cyclase (313 aa).

The Radical SAM core domain occupies 4 to 224 (RFGRSIEDLR…EIRSKHYRPR (221 aa)). Arg13 is a binding site for GTP. Residues Cys20, Cys24, and Cys27 each coordinate [4Fe-4S] cluster. Lys60 lines the GTP pocket. Gly64 is an S-adenosyl-L-methionine binding site. GTP is bound at residue Thr90. Ser114 is a binding site for S-adenosyl-L-methionine. Lys151 provides a ligand contact to GTP. The [4Fe-4S] cluster site is built by Cys244 and Cys247. GTP is bound at residue 249 to 251 (RIR). Cys261 is a binding site for [4Fe-4S] cluster.

The protein belongs to the radical SAM superfamily. MoaA family. Requires [4Fe-4S] cluster as cofactor.

It carries out the reaction GTP + AH2 + S-adenosyl-L-methionine = (8S)-3',8-cyclo-7,8-dihydroguanosine 5'-triphosphate + 5'-deoxyadenosine + L-methionine + A + H(+). It functions in the pathway cofactor biosynthesis; molybdopterin biosynthesis. In terms of biological role, catalyzes the cyclization of GTP to (8S)-3',8-cyclo-7,8-dihydroguanosine 5'-triphosphate. The polypeptide is Probable GTP 3',8-cyclase (Sulfurisphaera tokodaii (strain DSM 16993 / JCM 10545 / NBRC 100140 / 7) (Sulfolobus tokodaii)).